A 289-amino-acid chain; its full sequence is Rhodopsin (289 aa).

Topologically, residues 1–7 (YLVSPAA) are extracellular. Residues 8 to 32 (YAALGAYMFLLILVGFPVNFLTLYV) form a helical membrane-spanning segment. Over 33 to 44 (TLDHKKLRTPLN) the chain is Cytoplasmic. The chain crosses the membrane as a helical span at residues 45 to 67 (YILLNLAVADLFMVLGGFTTTMY). At 68–81 (TSMHGYFVLGRLGC) the chain is on the extracellular side. A disulfide bridge connects residues C81 and C158. Residues 82-104 (NLEGFFATLGGEIALWSLVVLAI) traverse the membrane as a helical segment. A 'Ionic lock' involved in activated form stabilization motif is present at residues 105–107 (ERW). The Cytoplasmic segment spans residues 105–123 (ERWIVVCKPISNFRFTEDH). The helical transmembrane segment at 124 to 144 (AIMGLAFSWVMALTCAVPPLV) threads the bilayer. Over 145-173 (GWSRYIPEGMQCSCGVDYYTRAEGFNTES) the chain is Extracellular. A helical membrane pass occupies residues 174 to 195 (FVLYMFTVHFLIPLSVIFFCYG). The Cytoplasmic portion of the chain corresponds to 196–223 (RLLCAVKEAAAAQQESETTQRAEKEVSR). The chain crosses the membrane as a helical span at residues 224 to 245 (MVVLMVIGFLVCWLPYASVAWW). Residues 246–257 (IFCNQGSEFGPI) lie on the Extracellular side of the membrane. A helical membrane pass occupies residues 258 to 279 (FMTLPAFFAKTSAIYNPLIYIC). K267 carries the post-translational modification N6-(retinylidene)lysine. At 280–289 (MNKQFRHCMI) the chain is on the cytoplasmic side.

It belongs to the G-protein coupled receptor 1 family. Opsin subfamily. Phosphorylated on some or all of the serine and threonine residues present in the C-terminal region. In terms of processing, contains one covalently linked retinal chromophore.

It is found in the membrane. Its subcellular location is the cell projection. The protein resides in the cilium. It localises to the photoreceptor outer segment. Its function is as follows. Photoreceptor required for image-forming vision at low light intensity. While most salt water fish species use retinal as chromophore, most freshwater fish use 3-dehydroretinal, or a mixture of retinal and 3-dehydroretinal. Light-induced isomerization of 11-cis to all-trans retinal triggers a conformational change that activates signaling via G-proteins. Subsequent receptor phosphorylation mediates displacement of the bound G-protein alpha subunit by arrestin and terminates signaling. This is Rhodopsin (rho) from Procottus jeittelesii (Red sculpin).